We begin with the raw amino-acid sequence, 283 residues long: Large ribosomal subunit protein uL4 (283 aa).

This sequence belongs to the universal ribosomal protein uL4 family. In terms of assembly, part of the 50S ribosomal subunit.

One of the primary rRNA binding proteins, this protein initially binds near the 5'-end of the 23S rRNA. It is important during the early stages of 50S assembly. It makes multiple contacts with different domains of the 23S rRNA in the assembled 50S subunit and ribosome. In terms of biological role, forms part of the polypeptide exit tunnel. The protein is Large ribosomal subunit protein uL4 of Pyrobaculum aerophilum (strain ATCC 51768 / DSM 7523 / JCM 9630 / CIP 104966 / NBRC 100827 / IM2).